A 250-amino-acid polypeptide reads, in one-letter code: Indole-3-glycerol phosphate synthase (250 aa).

Belongs to the TrpC family.

It catalyses the reaction 1-(2-carboxyphenylamino)-1-deoxy-D-ribulose 5-phosphate + H(+) = (1S,2R)-1-C-(indol-3-yl)glycerol 3-phosphate + CO2 + H2O. Its pathway is amino-acid biosynthesis; L-tryptophan biosynthesis; L-tryptophan from chorismate: step 4/5. This is Indole-3-glycerol phosphate synthase from Bacillus velezensis (strain DSM 23117 / BGSC 10A6 / LMG 26770 / FZB42) (Bacillus amyloliquefaciens subsp. plantarum).